Here is a 158-residue protein sequence, read N- to C-terminus: Copper transporter 2 (158 aa).

Residues 1 to 20 (MDHDHMHDMPPPSPSSSSMS) form a disordered region. The next 2 helical transmembrane spans lie at 53–73 (GMYALCLIVIFLLAVIAEWLA) and 104–124 (YLVMLAVMSFNAGVFIVAIAG).

This sequence belongs to the copper transporter (Ctr) (TC 1.A.56) family. SLC31A subfamily. As to expression, highly expressed in leaves and at lower levels in roots, stems and flowers.

The protein resides in the membrane. Functionally, involved in the transport of copper. The protein is Copper transporter 2 (COPT2) of Arabidopsis thaliana (Mouse-ear cress).